Consider the following 558-residue polypeptide: Potassium-transporting ATPase potassium-binding subunit (558 aa).

The next 12 membrane-spanning stretches (helical) occupy residues 1 to 21 (MSIV…SRYL), 60 to 80 (IKHF…LLLI), 129 to 149 (VITF…IAML), 169 to 189 (FIVR…ISQG), 246 to 266 (WSNY…VFLF), 281 to 301 (IMIF…CLYF), 326 to 346 (FGIG…TGTV), 353 to 373 (LTPL…VFGG), 376 to 396 (VGLM…SLMI), 415 to 435 (IALS…LAFI), 485 to 505 (IVML…VSSL), and 523 to 543 (LFFS…TFLP).

It belongs to the KdpA family. The system is composed of three essential subunits: KdpA, KdpB and KdpC.

The protein resides in the cell membrane. Part of the high-affinity ATP-driven potassium transport (or Kdp) system, which catalyzes the hydrolysis of ATP coupled with the electrogenic transport of potassium into the cytoplasm. This subunit binds the extracellular potassium ions and delivers the ions to the membrane domain of KdpB through an intramembrane tunnel. This chain is Potassium-transporting ATPase potassium-binding subunit, found in Staphylococcus haemolyticus (strain JCSC1435).